The following is a 343-amino-acid chain: Tetraacyldisaccharide 4'-kinase (343 aa).

55-62 (TVGGEGKT) contacts ATP.

It belongs to the LpxK family.

The enzyme catalyses a lipid A disaccharide + ATP = a lipid IVA + ADP + H(+). Its pathway is glycolipid biosynthesis; lipid IV(A) biosynthesis; lipid IV(A) from (3R)-3-hydroxytetradecanoyl-[acyl-carrier-protein] and UDP-N-acetyl-alpha-D-glucosamine: step 6/6. In terms of biological role, transfers the gamma-phosphate of ATP to the 4'-position of a tetraacyldisaccharide 1-phosphate intermediate (termed DS-1-P) to form tetraacyldisaccharide 1,4'-bis-phosphate (lipid IVA). In Chelativorans sp. (strain BNC1), this protein is Tetraacyldisaccharide 4'-kinase.